Reading from the N-terminus, the 547-residue chain is MFS-type transporter M6 (547 aa).

A disordered region spans residues 1-45; that stretch reads MHRRRRDNLMTPAEMVASMKPPQSLSTEDDDGSRRDSESSADVLK. Residues 81–101 form a helical membrane-spanning segment; that stretch reads VLVVASFAAAISPFSTSTYYP. N-linked (GlcNAc...) asparagine glycosylation is present at Asn118. Residues 146-166 form a helical membrane-spanning segment; the sequence is PMFLVCFAIYFVANVGLALQN. Asn167 carries N-linked (GlcNAc...) asparagine glycosylation. 2 consecutive transmembrane segments (helical) span residues 206–226 and 236–256; these read LIYA…IGGL and VFWF…IFFG. N-linked (GlcNAc...) asparagine glycosylation is present at Asn274. 5 consecutive transmembrane segments (helical) span residues 317–337, 347–367, 407–427, 432–452, and 469–489; these read FILS…TSVL, YDAV…LLAY, LGFV…YGWQ, APLA…TGVM, and AVGA…VAVV. N-linked (GlcNAc...) asparagine glycosylation is present at Asn493. Residues 496 to 516 traverse the membrane as a helical segment; sequence AGIGWTATVTAGLWVLMMPTL.

Belongs to the major facilitator superfamily. CAR1 family.

Its subcellular location is the membrane. MFS-type transporter; part of the gene cluster that mediates the biosynthesis of squalestatin S1 (SQS1, also known as zaragozic acid A), a heavily oxidized fungal polyketide that offers potent cholesterol lowering activity by targeting squalene synthase (SS). The polypeptide is MFS-type transporter M6 (Phoma sp. (strain ATCC 20986 / MF5453)).